The chain runs to 217 residues: Small ribosomal subunit protein uS3 (217 aa).

The KH type-2 domain occupies 40 to 110 (IRDLINKGFN…EVYINIHEVR (71 aa)).

It belongs to the universal ribosomal protein uS3 family. As to quaternary structure, part of the 30S ribosomal subunit. Forms a tight complex with proteins S10 and S14.

In terms of biological role, binds the lower part of the 30S subunit head. Binds mRNA in the 70S ribosome, positioning it for translation. The chain is Small ribosomal subunit protein uS3 from Rickettsia africae (strain ESF-5).